Here is a 185-residue protein sequence, read N- to C-terminus: Ribosome-recycling factor (185 aa).

It belongs to the RRF family.

The protein localises to the cytoplasm. Its function is as follows. Responsible for the release of ribosomes from messenger RNA at the termination of protein biosynthesis. May increase the efficiency of translation by recycling ribosomes from one round of translation to another. The polypeptide is Ribosome-recycling factor (Chromobacterium violaceum (strain ATCC 12472 / DSM 30191 / JCM 1249 / CCUG 213 / NBRC 12614 / NCIMB 9131 / NCTC 9757 / MK)).